The sequence spans 318 residues: Deoxyhypusine hydroxylase (318 aa).

HEAT-like PBS-type repeat units follow at residues 70–96 (LKHE…VLEN) and 103–129 (VRHE…YFKE). Fe cation contacts are provided by His-72, Glu-73, His-105, Glu-106, His-231, Glu-232, His-264, and Glu-265. The stretch at 262-288 (VRHEAAEALGSIATDECLPVLQSFLND) is one HEAT-like PBS-type 3 repeat.

The protein belongs to the deoxyhypusine hydroxylase family. It depends on Fe(2+) as a cofactor.

Its subcellular location is the cytoplasm. The protein localises to the nucleus. The catalysed reaction is [eIF5A protein]-deoxyhypusine + AH2 + O2 = [eIF5A protein]-hypusine + A + H2O. It functions in the pathway protein modification; eIF5A hypusination. Functionally, catalyzes the hydroxylation of the N(6)-(4-aminobutyl)-L-lysine intermediate to form hypusine, an essential post-translational modification only found in mature eIF-5A factor. The polypeptide is Deoxyhypusine hydroxylase (Candida albicans (strain SC5314 / ATCC MYA-2876) (Yeast)).